Here is a 403-residue protein sequence, read N- to C-terminus: Peroxisomal membrane protein PEX13 (403 aa).

Residues 1–11 (MASQPPPPPKP) show a composition bias toward pro residues. The disordered stretch occupies residues 1–69 (MASQPPPPPK…SQQTGSGNLN (69 aa)). The Peroxisomal matrix segment spans residues 1–134 (MASQPPPPPK…SSRGAFQSIE (134 aa)). A compositionally biased stretch (polar residues) spans 59 to 69 (PSQQTGSGNLN). A helical membrane pass occupies residues 135-155 (SIVHAFASVSMMMDATFSAVY). The segment at 145–233 (MMMDATFSAV…EDRAANSAKS (89 aa)) is targeting to peroxisomes. Over 156 to 174 (NSFRAVLDVANHFSRLKIH) the chain is Cytoplasmic. The chain crosses the membrane as a helical span at residues 175–192 (FTKVFSAFALVRTIRYLY). The interaction with PEX19 stretch occupies residues 175 to 196 (FTKVFSAFALVRTIRYLYRRLQ). Topologically, residues 193 to 233 (RRLQWMIGLRRGLENEDLWAESEGTVACLGAEDRAANSAKS) are peroxisomal matrix. Residues 234–254 (WPIFLFFAVILGGPYLIWKLL) form a helical membrane-spanning segment. Over 255–403 (STHSDEVTDS…TGKNGDKQDL (149 aa)) the chain is Cytoplasmic. An SH3 domain is found at 272 to 336 (DDHVVARAEY…PANYVKILGK (65 aa)). Serine 354 is modified (phosphoserine).

Belongs to the peroxin-13 family. Interacts (via SH3 domain) with PEX14 (via SH3-binding motif); forming the PEX13-PEX14 docking complex. Interacts with PEX19.

The protein resides in the peroxisome membrane. Its function is as follows. Component of the PEX13-PEX14 docking complex, a translocon channel that specifically mediates the import of peroxisomal cargo proteins bound to PEX5 receptor. The PEX13-PEX14 docking complex forms a large import pore which can be opened to a diameter of about 9 nm. Mechanistically, PEX5 receptor along with cargo proteins associates with the PEX14 subunit of the PEX13-PEX14 docking complex in the cytosol, leading to the insertion of the receptor into the organelle membrane with the concomitant translocation of the cargo into the peroxisome matrix. Involved in the import of PTS1- and PTS2-type containing proteins. The protein is Peroxisomal membrane protein PEX13 (PEX13) of Bos taurus (Bovine).